A 488-amino-acid polypeptide reads, in one-letter code: 26S proteasome non-ATPase regulatory subunit 3 homolog A (488 aa).

Residues 240-421 (CRYLFYLGKI…GCMVSKETGD (182 aa)) enclose the PCI domain. Positions 451 to 488 (RFPPNTHKEKESDEKRRERKQQEEELAKHMAEEDDDDF) are disordered. A compositionally biased stretch (basic and acidic residues) spans 456–481 (THKEKESDEKRRERKQQEEELAKHMA).

It belongs to the proteasome subunit S3 family. Component of the 19S regulatory particle (RP/PA700) lid subcomplex of the 26S proteasome. The 26S proteasome is composed of a core protease (CP), known as the 20S proteasome, capped at one or both ends by the 19S regulatory particle (RP/PA700). The RP/PA700 complex is composed of at least 17 different subunits in two subcomplexes, the base and the lid, which form the portions proximal and distal to the 20S proteolytic core, respectively. Interacts with UCH1 and UCH2. As to expression, ubiquitous with highest expression in flowers.

In terms of biological role, acts as a regulatory subunit of the 26 proteasome which is involved in the ATP-dependent degradation of ubiquitinated proteins. This is 26S proteasome non-ATPase regulatory subunit 3 homolog A from Arabidopsis thaliana (Mouse-ear cress).